The following is a 114-amino-acid chain: MHEMSLMGGVFEAIEATLAHHHVKKVLLVKLKIGQLTNAEPDALQMAFAAFAQGTVCEGAELQIEMLPVKGRCRSCSEEFMVPGLIFACPVCQHLGIDITQGEELLLESLEVEE.

Residue His2 participates in Ni(2+) binding. 4 residues coordinate Zn(2+): Cys73, Cys76, Cys89, and Cys92.

This sequence belongs to the HypA/HybF family.

Its function is as follows. Involved in the maturation of [NiFe] hydrogenases. Required for nickel insertion into the metal center of the hydrogenase. The chain is Hydrogenase maturation factor HypA from Desulfitobacterium hafniense (strain DSM 10664 / DCB-2).